The sequence spans 382 residues: Histone acetyltransferase type B subunit 2 (382 aa).

5 WD repeats span residues 98–138 (ENNA…RYSH), 141–181 (PHTK…TTFK), 184–224 (IQKD…VVSQ), 228–268 (ESSN…ENSG), and 275–315 (GHSE…EEQQ). The interaction with the histone H4 N-terminus stretch occupies residues 317–321 (EDAED). Residues 332-372 (GHTAGVSDLSWCPFKDWMIGSVADDNIVHLWEISKKLITNE) form a WD 6 repeat.

This sequence belongs to the WD repeat RBAP46/RBAP48/MSI1 family. As to quaternary structure, component of the HAT-B complex composed of at least HAT1 and HAT2. The HAT-B complex binds to histone H4 tail.

Its subcellular location is the cytoplasm. The protein resides in the nucleus. In terms of biological role, regulatory subunit of the histone acetylase B (HAT-B) complex. The complex acetylates 'Lys-14' of histone H4 which is required for telomeric silencing. In Candida albicans (strain SC5314 / ATCC MYA-2876) (Yeast), this protein is Histone acetyltransferase type B subunit 2 (HAT2).